The primary structure comprises 335 residues: DNA-directed RNA polymerase RPB7 homolog (335 aa).

This sequence belongs to the Asfivirus DNA-directed RNA polymerase RPB7 homolog family. Part of the viral DNA-directed RNA polymerase that consists of 8 polII-like subunits (RPB1, RPB2, RPB3, RPB5, RPB6, RPB7, RPB9, RPB10), a capping enzyme and a termination factor.

The protein resides in the host cytoplasm. It is found in the virion. In terms of biological role, component of the DNA-directed RNA polymerase (RNAP) that catalyzes the transcription in the cytoplasm of viral DNA into RNA using the four ribonucleoside triphosphates as substrates. This Ornithodoros (relapsing fever ticks) protein is DNA-directed RNA polymerase RPB7 homolog.